Here is a 287-residue protein sequence, read N- to C-terminus: Phosphatidylinositol transfer protein 5 (287 aa).

Residues 252–287 (FHNNNNNNSNNSNNNNNNNTQPQRSSFFSRSTDGNK) are disordered. Residues 254-270 (NNNNNNSNNSNNNNNNN) show a composition bias toward low complexity. The span at 271–287 (TQPQRSSFFSRSTDGNK) shows a compositional bias: polar residues.

It belongs to the PtdIns transfer protein family. PI transfer class IIA subfamily.

Its function is as follows. Phosphatidylinositol transfer proteins mediate the monomeric transport of lipids by shielding a lipid from the aqueous environment and binding the lipid in a hydrophobic cavity. The polypeptide is Phosphatidylinositol transfer protein 5 (pitE) (Dictyostelium discoideum (Social amoeba)).